Reading from the N-terminus, the 582-residue chain is Enhancer of polycomb-like protein 1 (582 aa).

A coiled-coil region spans residues 238 to 295 (RDAQSADKLRRLRKELEDARQLVALVRQRELARKEMLSMERQIFLQRSEVKEMKRKLN). The tract at residues 323–351 (PEQPKKKPAEAPAAQRPTAPQIRMPQKPG) is disordered. Positions 352-385 (TQAADDMQLLEDVQAEKENEILRDIKQNIAKHIK) form a coiled coil. Positions 539 to 555 (AQAHAQAQAQKRLQAEQ) are enriched in low complexity. A disordered region spans residues 539–582 (AQAHAQAQAQKRLQAEQTTTNNGPPNIGHTMGSNPGPGAVASTS).

The protein belongs to the enhancer of polycomb family. Component of the NuA4 histone acetyltransferase complex.

The protein resides in the nucleus. In terms of biological role, component of the NuA4 histone acetyltransferase complex which is involved in transcriptional activation of selected genes principally by acetylation of nucleosomal histone H4 and H2A. The NuA4 complex is also involved in DNA repair. Involved in gene silencing by neighboring heterochromatin, blockage of the silencing spreading along the chromosome, and required for cell cycle progression through G2/M. The polypeptide is Enhancer of polycomb-like protein 1 (epl1) (Aspergillus fumigatus (strain ATCC MYA-4609 / CBS 101355 / FGSC A1100 / Af293) (Neosartorya fumigata)).